Reading from the N-terminus, the 614-residue chain is BPI fold-containing family B member 4 (614 aa).

Positions 1–18 (MWMAWCVAALSVVAVCGT) are cleaved as a signal peptide. Asn273 carries N-linked (GlcNAc...) asparagine glycosylation. Cys295 and Cys332 are disulfide-bonded.

The protein belongs to the BPI/LBP/Plunc superfamily. BPI/LBP family. As to expression, expressed in nasal tissue.

The protein resides in the secreted. It localises to the cytoplasm. In terms of biological role, may have the capacity to recognize and bind specific classes of odorants. May act as a carrier molecule, transporting odorants across the mucus layer to access receptor sites. May serve as a primary defense mechanism by recognizing and removing potentially harmful odorants or pathogenic microorganisms from the mucosa or clearing excess odorant from mucus to enable new odorant stimuli to be received. The protein is BPI fold-containing family B member 4 (BPIFB4) of Homo sapiens (Human).